The chain runs to 324 residues: Tyrosine--tRNA ligase (324 aa).

Residue tyrosine 36 participates in L-tyrosine binding. The short motif at 41–49 (PSGKVHLGH) is the 'HIGH' region element. Residues tyrosine 158, glutamine 162, aspartate 165, and glutamine 180 each coordinate L-tyrosine. A 'KMSKS' region motif is present at residues 215–219 (KMSSS). Serine 218 contacts ATP.

It belongs to the class-I aminoacyl-tRNA synthetase family. TyrS type 3 subfamily. In terms of assembly, homodimer.

Its subcellular location is the cytoplasm. The enzyme catalyses tRNA(Tyr) + L-tyrosine + ATP = L-tyrosyl-tRNA(Tyr) + AMP + diphosphate + H(+). In terms of biological role, catalyzes the attachment of tyrosine to tRNA(Tyr) in a two-step reaction: tyrosine is first activated by ATP to form Tyr-AMP and then transferred to the acceptor end of tRNA(Tyr). The protein is Tyrosine--tRNA ligase of Methanopyrus kandleri (strain AV19 / DSM 6324 / JCM 9639 / NBRC 100938).